The primary structure comprises 380 residues: Alkaline protease (380 aa).

Positions 1–27 (MKKPLGKIVASTALLISVAFSSSIASA) are cleaved as a signal peptide. A propeptide spanning residues 28–111 (AEEAKEKYLI…IEEDAEVTTM (84 aa)) is cleaved from the precursor. Residues 34–111 (KYLIGFNEQE…IEEDAEVTTM (78 aa)) form the Inhibitor I9 domain. Residue Gln-113 participates in Ca(2+) binding. Residues 116 to 379 (PWGISRVQAP…SGLVNAEAAT (264 aa)) enclose the Peptidase S8 domain. The active-site Charge relay system is Asp-143. Asp-151 is a Ca(2+) binding site. Catalysis depends on His-173, which acts as the Charge relay system. 7 residues coordinate Ca(2+): Leu-184, Asn-186, Ile-188, Val-190, Ala-274, Tyr-276, and Ala-279. The active-site Charge relay system is the Ser-326.

Belongs to the peptidase S8 family. The cofactor is Ca(2+).

The protein resides in the secreted. The sequence is that of Alkaline protease from Shouchella clausii (Alkalihalobacillus clausii).